The primary structure comprises 379 residues: ORC1-type DNA replication protein 2 (379 aa).

ATP-binding positions include 69 to 73, Tyr211, and Arg223; that span reads TGKTT.

Belongs to the CDC6/cdc18 family. Interacts with MCM. Autophosphorylated on a serine. Phosphorylation is inhibited by binding to MCM. Both single-stranded DNA and double-stranded DNA inhibit the phosphorylation reaction.

Involved in regulation of DNA replication. Dissociates the MCM complex and inhibits the MCM helicase activity, suggesting that it may function as a helicase loader. Binds to both specific and random double-stranded or single-stranded DNA. This Methanothermobacter thermautotrophicus (strain ATCC 29096 / DSM 1053 / JCM 10044 / NBRC 100330 / Delta H) (Methanobacterium thermoautotrophicum) protein is ORC1-type DNA replication protein 2 (cdc6-2).